The chain runs to 366 residues: Histone-lysine N-methyltransferase SETD7 (366 aa).

MORN repeat units follow at residues 36–58, 59–81, and 106–128; these read FEGN…DGST, LEGY…DGGV, and FKGQ…DGGS. The region spanning 214–336 is the SET domain; the sequence is ERVYVADSLI…AEEELTVAYG (123 aa). S-adenosyl-L-methionine-binding positions include 226–228, Asn296, His297, and Glu356; that span reads AGE.

Belongs to the class V-like SAM-binding methyltransferase superfamily. Histone-lysine methyltransferase family. SET7 subfamily. In terms of assembly, interacts with IPF1/PDX-1.

It localises to the nucleus. Its subcellular location is the chromosome. The catalysed reaction is L-lysyl(4)-[histone H3] + S-adenosyl-L-methionine = N(6)-methyl-L-lysyl(4)-[histone H3] + S-adenosyl-L-homocysteine + H(+). It catalyses the reaction L-lysyl-[protein] + S-adenosyl-L-methionine = N(6)-methyl-L-lysyl-[protein] + S-adenosyl-L-homocysteine + H(+). Its function is as follows. Histone methyltransferase that specifically monomethylates 'Lys-4' of histone H3. H3 'Lys-4' methylation represents a specific tag for epigenetic transcriptional activation. Plays a central role in the transcriptional activation of genes such as collagenase or insulin. Recruited by IPF1/PDX-1 to the insulin promoter, leading to activate transcription. Also has methyltransferase activity toward non-histone proteins such as CGAS, p53/TP53, TAF10, and possibly TAF7 by recognizing and binding the [KR]-[STA]-K in substrate proteins. Monomethylates 'Lys-189' of TAF10, leading to increase the affinity of TAF10 for RNA polymerase II. Monomethylates 'Lys-372' of p53/TP53, stabilizing p53/TP53 and increasing p53/TP53-mediated transcriptional activation. Monomethylates 'Lys-491' of CGAS, promoting interaction between SGF29 and CGAS. The protein is Histone-lysine N-methyltransferase SETD7 (Setd7) of Mus musculus (Mouse).